The primary structure comprises 151 residues: Secreted RxLR effector protein 30 (151 aa).

An N-terminal signal peptide occupies residues 1–19 (MRSSTILIVLGIAILAVNG). A RxLR-dEER motif is present at residues 38-53 (RLLRSTSTEHETDEER).

The protein belongs to the RxLR effector family.

It is found in the secreted. The protein localises to the host nucleus. Its function is as follows. Effector that acts as a broad suppressor of cell death to interrupt plant immunity. Inhibits cell death induced by cell death-inducing proteins, including the PAMP elicitor INF1 from P.infestans. The polypeptide is Secreted RxLR effector protein 30 (Plasmopara viticola (Downy mildew of grapevine)).